The sequence spans 227 residues: Esterase OVCA2 (227 aa).

Active-site charge relay system residues include S120, D180, and H207.

It belongs to the LovG family.

The enzyme catalyses a carboxylic ester + H2O = an alcohol + a carboxylate + H(+). In terms of biological role, exhibits ester hydrolase activity with a strong preference for long-chain alkyl ester substrates and high selectivity against a variety of short, branched, and substituted esters. Is able to hydrolyze ester bonds within a wide range of p-nitrophenyl derivatives (C2-C14) in vitro, with a strong preference toward substrates of &gt;8 carbons. This is Esterase OVCA2 (ovca2) from Danio rerio (Zebrafish).